The primary structure comprises 654 residues: Protein LYK2 (654 aa).

The signal sequence occupies residues 1-25 (MAVSVSKQYMTSLVVILLFISLSSL). The Extracellular portion of the chain corresponds to 26-241 (SPTSTSHSCD…PSKKKRSKMK (216 aa)). 3 cysteine pairs are disulfide-bonded: Cys50–Cys102, Cys57–Cys163, and Cys100–Cys161. Asn103, Asn170, Asn193, and Asn204 each carry an N-linked (GlcNAc...) asparagine glycan. One copy of the LysM; degenerate repeat lies at 177–217 (YPVGVRDSVSSLAVRFNTTEDAIVSANNKSGVVPLKPALIP). Positions 218-238 (LDHKPEKQGSRKRNPSKKKRS) are disordered. Positions 227–238 (SRKRNPSKKKRS) are enriched in basic residues. The chain crosses the membrane as a helical span at residues 242-262 (LMIAVSSAIAGVCGLVTLMVF). Residues 263–654 (GYLHWKKETQ…PLVKKSSIID (392 aa)) lie on the Cytoplasmic side of the membrane. The region spanning 324 to 619 (TPRKPVLEIY…EIAERVSRLV (296 aa)) is the Protein kinase domain. ATP contacts are provided by residues 330–338 (LEIYAFEEL) and Lys368.

This sequence belongs to the protein kinase superfamily. Ser/Thr protein kinase family.

The protein localises to the cell membrane. In terms of biological role, may recognize microbe-derived N-acetylglucosamine (NAG)-containing ligands. This chain is Protein LYK2 (LYK2), found in Arabidopsis thaliana (Mouse-ear cress).